The chain runs to 109 residues: Probable endoribonuclease MazF5 (109 aa).

Belongs to the PemK/MazF family. As to quaternary structure, forms a complex with cognate antitoxin MazE5.

Its function is as follows. Toxic component of a type II toxin-antitoxin (TA) system. Upon expression in M.smegmatis inhibits colony formation. Its toxic effect is neutralized by coexpression with cognate antitoxin MazE5. Probably an endoribonuclease. The polypeptide is Probable endoribonuclease MazF5 (mazF5) (Mycobacterium tuberculosis (strain ATCC 25618 / H37Rv)).